A 158-amino-acid polypeptide reads, in one-letter code: Complexin-3 (158 aa).

The segment at 14-47 (KNLTGSLGGGEDKGDGDKSAAEAQGMSREEYEEY) is disordered. Over residues 23 to 33 (GEDKGDGDKSA) the composition is skewed to basic and acidic residues. A coiled-coil region spans residues 39 to 74 (MSREEYEEYQKQLVEEKMERDAQFTQRKAERATLRS). Cys155 carries the post-translational modification Cysteine methyl ester. Cys155 carries S-farnesyl cysteine lipidation. Positions 156-158 (HIM) are cleaved as a propeptide — removed in mature form.

It belongs to the complexin/synaphin family. In terms of assembly, binds to the SNARE core complex containing SNAP25, VAMP2 and STX1A. Farnesylation mediates presynaptic targeting. Present in many brain regions, including hippocampus and cerebellum (at protein level). Expressed in the retina (at protein level). Expressed in retinal amacrine cells (at protein level). Expressed in retinal photoreceptor ribbon synapses. Expressed in the retinal inner nuclear layer, at bipolar cells (at protein level). Expressed in cone photoreceptor synaptic terminals (at protein level).

It is found in the synapse. Its subcellular location is the cell membrane. In terms of biological role, complexin that regulates SNARE protein complex-mediated synaptic vesicle fusion. Required for the maintenance of synaptic ultrastructure in the adult retina. Positively regulates synaptic transmission through synaptic vesicle availability and exocytosis of neurotransmitters at photoreceptor ribbon synapses in the retina. Suppresses tonic photoreceptor activity and baseline 'noise' by suppression of Ca(2+) vesicle tonic release and the facilitation of evoked synchronous and asynchronous Ca(2+) vesicle release. This is Complexin-3 (Cplx3) from Mus musculus (Mouse).